The primary structure comprises 649 residues: Probable cyclic nucleotide-gated ion channel 12 (649 aa).

Over 1-43 (MNHRRSKFARIDSMGVDGKLKSVRGRLKKVYGKMKTLENWRKT) the chain is Cytoplasmic. Residues 44 to 64 (VLLACVVALAIDPLFLFIPLI) traverse the membrane as a helical segment. The Extracellular segment spans residues 65–76 (DSQRFCFTFDKT). The chain crosses the membrane as a helical span at residues 77 to 97 (LVAVVCVIRTFIDTFYVIHII). Topologically, residues 98–128 (YYLITETIAPRSQASLRGEIVVHSKATLKTR) are cytoplasmic. A helical membrane pass occupies residues 129–149 (LLFHFIVDIISVLPIPQVVVL). Residues 150 to 162 (TLIPLSASLVSER) lie on the Extracellular side of the membrane. Residues 163–183 (ILKWIILSQYVPRIIRMYPLY) form a helical membrane-spanning segment. Over 184 to 200 (KEVTRAFGTVAESKWAG) the chain is Cytoplasmic. A helical membrane pass occupies residues 201–221 (AALNLFLYMLHSYVFGAFWYL). Topologically, residues 222 to 329 (SSIERKSKCW…QNLETSNSAG (108 aa)) are extracellular. The helical transmembrane segment at 330–350 (EIFFAIIICVSGLLLFAVLIG) threads the bilayer. The Cytoplasmic segment spans residues 351–649 (NVQKYLQSST…ADLEFAKAEA (299 aa)). A nucleoside 3',5'-cyclic phosphate is bound by residues 436-559 (LNIM…TFRL) and Glu507. A calmodulin-binding region spans residues 545–560 (LNVFQRQKLQRTFRLY). In terms of domain architecture, IQ spans 565-594 (RSWAAFFIQAAWRKHCKRKLSKTRDNENIP). The interval 618-649 (RRKDTADCSSSPDMSPPVPHKPADLEFAKAEA) is disordered. The segment covering 638–649 (KPADLEFAKAEA) has biased composition (basic and acidic residues).

The protein belongs to the cyclic nucleotide-gated cation channel (TC 1.A.1.5) family. As to quaternary structure, homotetramer or heterotetramer.

The protein localises to the cell membrane. In terms of biological role, probable cyclic nucleotide-gated ion channel. The polypeptide is Probable cyclic nucleotide-gated ion channel 12 (CNGC12) (Arabidopsis thaliana (Mouse-ear cress)).